The following is a 170-amino-acid chain: Photosystem II extrinsic protein V (170 aa).

An N-terminal signal peptide occupies residues 1-33; it reads MASFFSTLRRSLNRLLIALPVLLGLMISTPAQA. Heme c-binding residues include C70, C73, H74, and H125.

The protein belongs to the cytochrome c family. PsbV subfamily. In terms of assembly, PSII is composed of 1 copy each of membrane proteins PsbA, PsbB, PsbC, PsbD, PsbE, PsbF, PsbH, PsbI, PsbJ, PsbK, PsbL, PsbM, PsbT, PsbX, PsbY, PsbZ, Psb30/Ycf12, peripheral proteins PsbO, CyanoQ (PsbQ), PsbU, PsbV and a large number of cofactors. It forms dimeric complexes. Requires heme c as cofactor.

It is found in the cellular thylakoid membrane. In terms of biological role, one of the extrinsic, lumenal subunits of photosystem II (PSII). PSII is a light-driven water plastoquinone oxidoreductase, using light energy to abstract electrons from H(2)O, generating a proton gradient subsequently used for ATP formation. The extrinsic proteins stabilize the structure of photosystem II oxygen-evolving complex (OEC), the ion environment of oxygen evolution and protect the OEC against heat-induced inactivation. Low-potential cytochrome c that plays a role in the OEC of PSII. The protein is Photosystem II extrinsic protein V of Synechococcus sp. (strain CC9311).